A 483-amino-acid chain; its full sequence is Aspartyl/glutamyl-tRNA(Asn/Gln) amidotransferase subunit B (483 aa).

This sequence belongs to the GatB/GatE family. GatB subfamily. As to quaternary structure, heterotrimer of A, B and C subunits.

The catalysed reaction is L-glutamyl-tRNA(Gln) + L-glutamine + ATP + H2O = L-glutaminyl-tRNA(Gln) + L-glutamate + ADP + phosphate + H(+). It catalyses the reaction L-aspartyl-tRNA(Asn) + L-glutamine + ATP + H2O = L-asparaginyl-tRNA(Asn) + L-glutamate + ADP + phosphate + 2 H(+). Allows the formation of correctly charged Asn-tRNA(Asn) or Gln-tRNA(Gln) through the transamidation of misacylated Asp-tRNA(Asn) or Glu-tRNA(Gln) in organisms which lack either or both of asparaginyl-tRNA or glutaminyl-tRNA synthetases. The reaction takes place in the presence of glutamine and ATP through an activated phospho-Asp-tRNA(Asn) or phospho-Glu-tRNA(Gln). The chain is Aspartyl/glutamyl-tRNA(Asn/Gln) amidotransferase subunit B from Lachnospira eligens (strain ATCC 27750 / DSM 3376 / VPI C15-48 / C15-B4) (Eubacterium eligens).